The following is a 119-amino-acid chain: Large ribosomal subunit protein uL18 (119 aa).

The protein belongs to the universal ribosomal protein uL18 family. In terms of assembly, part of the 50S ribosomal subunit; part of the 5S rRNA/L5/L18/L25 subcomplex. Contacts the 5S and 23S rRNAs.

This is one of the proteins that bind and probably mediate the attachment of the 5S RNA into the large ribosomal subunit, where it forms part of the central protuberance. This Xanthomonas campestris pv. campestris (strain 8004) protein is Large ribosomal subunit protein uL18.